The sequence spans 195 residues: Imidazoleglycerol-phosphate dehydratase (195 aa).

This sequence belongs to the imidazoleglycerol-phosphate dehydratase family.

The protein resides in the cytoplasm. The enzyme catalyses D-erythro-1-(imidazol-4-yl)glycerol 3-phosphate = 3-(imidazol-4-yl)-2-oxopropyl phosphate + H2O. Its pathway is amino-acid biosynthesis; L-histidine biosynthesis; L-histidine from 5-phospho-alpha-D-ribose 1-diphosphate: step 6/9. The chain is Imidazoleglycerol-phosphate dehydratase from Polynucleobacter asymbioticus (strain DSM 18221 / CIP 109841 / QLW-P1DMWA-1) (Polynucleobacter necessarius subsp. asymbioticus).